A 186-amino-acid chain; its full sequence is Elongation factor P (186 aa).

Belongs to the elongation factor P family.

It localises to the cytoplasm. Its pathway is protein biosynthesis; polypeptide chain elongation. Its function is as follows. Involved in peptide bond synthesis. Stimulates efficient translation and peptide-bond synthesis on native or reconstituted 70S ribosomes in vitro. Probably functions indirectly by altering the affinity of the ribosome for aminoacyl-tRNA, thus increasing their reactivity as acceptors for peptidyl transferase. The polypeptide is Elongation factor P (Shewanella piezotolerans (strain WP3 / JCM 13877)).